The sequence spans 144 residues: Large ribosomal subunit protein uL11 (144 aa).

Belongs to the universal ribosomal protein uL11 family. In terms of assembly, part of the ribosomal stalk of the 50S ribosomal subunit. Interacts with L10 and the large rRNA to form the base of the stalk. L10 forms an elongated spine to which L12 dimers bind in a sequential fashion forming a multimeric L10(L12)X complex. In terms of processing, one or more lysine residues are methylated.

Forms part of the ribosomal stalk which helps the ribosome interact with GTP-bound translation factors. In Neisseria gonorrhoeae (strain ATCC 700825 / FA 1090), this protein is Large ribosomal subunit protein uL11.